The chain runs to 280 residues: Phosphonoacetaldehyde hydrolase (280 aa).

Catalysis depends on Asp-20, which acts as the Nucleophile. Asp-20 and Ala-22 together coordinate Mg(2+). Residue Lys-61 is the Schiff-base intermediate with substrate of the active site. Asp-194 provides a ligand contact to Mg(2+).

Belongs to the HAD-like hydrolase superfamily. PhnX family. Homodimer. It depends on Mg(2+) as a cofactor.

The enzyme catalyses phosphonoacetaldehyde + H2O = acetaldehyde + phosphate + H(+). Functionally, involved in phosphonate degradation. In Nitratidesulfovibrio vulgaris (strain DSM 19637 / Miyazaki F) (Desulfovibrio vulgaris), this protein is Phosphonoacetaldehyde hydrolase.